The sequence spans 380 residues: Nucleoporin Nup43 (380 aa).

Met-1 bears the N-acetylmethionine mark. WD repeat units follow at residues 8 to 57 (FVSQ…NLDS), 72 to 110 (RHHG…QTLS), 127 to 166 (PSYS…AVRT), 170 to 208 (ADSS…NEPS), 215 to 255 (GDRV…MPVS), and 259 to 299 (AHEA…PEKS).

In terms of assembly, component of the Nup107-160 subcomplex of the nuclear pore complex (NPC). The Nup107-160 subcomplex includes NUP160, NUP133, NUP107, NUP98, NUP85, NUP43, NUP37, SEH1 and SEC13.

The protein resides in the chromosome. It localises to the centromere. It is found in the kinetochore. Its subcellular location is the nucleus. The protein localises to the nuclear pore complex. Component of the Nup107-160 subcomplex of the nuclear pore complex (NPC). The Nup107-160 subcomplex is required for the assembly of a functional NPC. The Nup107-160 subcomplex is also required for normal kinetochore microtubule attachment, mitotic progression and chromosome segregation. In Homo sapiens (Human), this protein is Nucleoporin Nup43 (NUP43).